The chain runs to 160 residues: Cytochrome c-type biogenesis protein CcmE (160 aa).

Topologically, residues 1–9 (MRGLKKKRR) are cytoplasmic. Residues 10–30 (IQIIAIAAVALTIATIMIGTA) traverse the membrane as a helical; Signal-anchor for type II membrane protein segment. Residues 31–160 (MRDGINFFRS…DGGYGGASGS (130 aa)) lie on the Periplasmic side of the membrane. Heme is bound by residues H123 and Y127. Residues 141-160 (VYKDPNATDADGGYGGASGS) form a disordered region.

It belongs to the CcmE/CycJ family.

It is found in the cell inner membrane. Its function is as follows. Heme chaperone required for the biogenesis of c-type cytochromes. Transiently binds heme delivered by CcmC and transfers the heme to apo-cytochromes in a process facilitated by CcmF and CcmH. This Dinoroseobacter shibae (strain DSM 16493 / NCIMB 14021 / DFL 12) protein is Cytochrome c-type biogenesis protein CcmE.